A 247-amino-acid polypeptide reads, in one-letter code: Probable transcriptional regulatory protein YPO2055/y2255/YP_1898 (247 aa).

This sequence belongs to the TACO1 family.

The protein localises to the cytoplasm. The protein is Probable transcriptional regulatory protein YPO2055/y2255/YP_1898 of Yersinia pestis.